The sequence spans 331 residues: Ornithine carbamoyltransferase (331 aa).

Carbamoyl phosphate-binding positions include 55–58, Gln82, Arg106, and 133–136; these read STRT and HPTQ. L-ornithine-binding positions include Asn166, Asp230, and 234 to 235; that span reads SM. Carbamoyl phosphate-binding positions include 272–273 and Arg317; that span reads CL.

The protein belongs to the aspartate/ornithine carbamoyltransferase superfamily. OTCase family.

It localises to the cytoplasm. It catalyses the reaction carbamoyl phosphate + L-ornithine = L-citrulline + phosphate + H(+). Its pathway is amino-acid biosynthesis; L-arginine biosynthesis; L-arginine from L-ornithine and carbamoyl phosphate: step 1/3. Reversibly catalyzes the transfer of the carbamoyl group from carbamoyl phosphate (CP) to the N(epsilon) atom of ornithine (ORN) to produce L-citrulline. The protein is Ornithine carbamoyltransferase (argF) of Neisseria meningitidis serogroup A / serotype 4A (strain DSM 15465 / Z2491).